Consider the following 332-residue polypeptide: Caffeoylshikimate esterase (332 aa).

Positions M1 to P13 are enriched in low complexity. Residues M1–M26 are disordered. Residue S147 is the Nucleophile of the active site. Active-site charge relay system residues include D268 and H298.

Belongs to the AB hydrolase superfamily. Monoacylglycerol lipase family. In terms of assembly, interacts with ACBP2. In terms of tissue distribution, expressed in vasculature of roots and leaves, stems, flowers and siliques.

Its subcellular location is the cell membrane. It carries out the reaction 5-O-[(E)-caffeoyl]-shikimate + H2O = shikimate + (E)-caffeate + H(+). Functionally, esterase involved in the biosynthesis of lignin. Hydrolyzes caffeoylshikimate into caffeate and shikimate. Together with 4-coumarate--CoA ligase (4CL), acts on an alternative reaction for the formation of caffeoyl-CoA and bypasses the second reaction of shikimate O-hydroxycinnamoyltransferase (HST). Also accepts 4-coumaroylshikimate as substrate, but with lower activity. According to PubMed:20345607 and PubMed:22915575, possesses monoacylglycerol O-acyltransferase, monoacylglycerol lipase and lysophospholipase activities in vitro. With the association of ACBP2, may promote the degradation of lysophosphatidylcholine and detoxify the peroxidized membrane in response to cadmium-induced oxidative stress. However these results require additional confirmation in vivo. The protein is Caffeoylshikimate esterase (CSE) of Arabidopsis thaliana (Mouse-ear cress).